The chain runs to 193 residues: V-type sodium ATPase subunit E (193 aa).

The protein belongs to the V-ATPase E subunit family. In terms of processing, the N-terminus is blocked.

In terms of biological role, involved in ATP-driven sodium extrusion. The sequence is that of V-type sodium ATPase subunit E (ntpE) from Enterococcus hirae (strain ATCC 9790 / DSM 20160 / JCM 8729 / LMG 6399 / NBRC 3181 / NCIMB 6459 / NCDO 1258 / NCTC 12367 / WDCM 00089 / R).